The following is a 377-amino-acid chain: Fructose-bisphosphate aldolase 1, chloroplastic (377 aa).

Substrate contacts are provided by Arg74 and Lys164. The active-site Proton acceptor is Glu204. Lys246 functions as the Schiff-base intermediate with dihydroxyacetone-P in the catalytic mechanism.

This sequence belongs to the class I fructose-bisphosphate aldolase family.

The protein localises to the plastid. It is found in the chloroplast. It carries out the reaction beta-D-fructose 1,6-bisphosphate = D-glyceraldehyde 3-phosphate + dihydroxyacetone phosphate. It participates in carbohydrate degradation; glycolysis; D-glyceraldehyde 3-phosphate and glycerone phosphate from D-glucose: step 4/4. This Chlamydomonas reinhardtii (Chlamydomonas smithii) protein is Fructose-bisphosphate aldolase 1, chloroplastic (ALDCHL).